Reading from the N-terminus, the 399-residue chain is Transcription factor UNE10 (399 aa).

2 disordered regions span residues 119 to 158 (QSKP…GSQR) and 173 to 228 (MGSH…RRDK). Positions 178–201 (NTIDDHDSVCHSRPQMEDEEEKKA) are enriched in basic and acidic residues. In terms of domain architecture, bHLH spans 213 to 262 (RAAAIHNQSERKRRDKINQRMKTLQKLVPNSSKTDKASMLDEVIEYLKQL).

Homodimer. Associates to PTAC12/HMR/PAP5 which acts as a transcriptional coactivator. Interacts with the Pfr form of phyB but barely with that of phyA. Binds to COP1. In terms of processing, ubiquitinated and subsequently targeted to protein degradation by COP1 in the dark, but not in far-red light. In terms of tissue distribution, mainly expressed in stems, leaves, seedlings, fruits and flowers, and, to a lower extent, in roots.

The protein resides in the nucleus. With respect to regulation, stabilized by phyA but destabilized by phyB. Accumulates in the dark but not in far-red light upon MG132 treatment, a 26S proteasome inhibitor (at protein level). Its function is as follows. Transcription factor binding to G-box elements (5'-CACGTG-3') in target genes promoters, particularly in far-red light but barely in the dark. Required during the fertilization of ovules by pollen. Repressor of phytochrome A-mediated far-red light responses including seed germination, suppression of hypocotyl elongation, and randomization of hypocotyl growth orientation. Does not inhibit phyB-induced red light responses. This chain is Transcription factor UNE10, found in Arabidopsis thaliana (Mouse-ear cress).